We begin with the raw amino-acid sequence, 58 residues long: UPF0391 membrane protein Plav_0056 (58 aa).

2 helical membrane passes run 4-24 (WAAV…GGLV) and 30-50 (IAQI…IFGV).

Belongs to the UPF0391 family.

Its subcellular location is the cell membrane. The chain is UPF0391 membrane protein Plav_0056 from Parvibaculum lavamentivorans (strain DS-1 / DSM 13023 / NCIMB 13966).